A 1487-amino-acid polypeptide reads, in one-letter code: MIRLGAPQSLVLLTLLIAAVLRCQGQDAQEAGSCLQNGQRYKDKDVWKPSSCRICVCDTGNVLCDDIICEDPDCLNPEIPFGECCPICPADLATASGKLGPKGQKGEPGDIRDIIGPRGPPGPQGPAGEQGPRGDRGDKGEKGAPGPRGRDGEPGTPGNPGPAGPPGPPGPPGLSAGNFAAQMAGGYDEKAGGAQMGVMQGPMGPMGPRGPPGPAGAPGPQGFQGNPGEPGEPGVSGPMGPRGPPGPAGKPGDDGEAGKPGKSGERGLPGPQGARGFPGTPGLPGVKGHRGYPGLDGAKGEAGAPGVKGESGSPGENGSPGPMGPRGLPGERGRTGPAGAAGARGNDGQPGPAGPPGPVGPAGGPGFPGAPGAKGEAGPTGARGPEGAQGSRGEPGNPGSPGPAGASGNPGTDGIPGAKGSAGAPGIAGAPGFPGPRGPPGPQGATGPLGPKGQAGEPGIAGFKGDQGPKGETGPAGPQGAPGPAGEEGKRGARGEPGGAGPIGPPGERGAPGNRGFPGQDGLAGPKGAPGERGPSGLTGPKGANGDPGRPGEPGLPGARGLTGRPGDAGPQGKVGPSGAPGEDGRPGPPGPQGARGQPGVMGFPGPKGANGEPGKAGEKGLAGAPGLRGLPGKDGETGAAGPPGPSGPAGERGEQGAPGPSGFQGLPGPPGPPGEGGKQGDQGIPGEAGAPGLVGPRGERGFPGERGSPGAQGLQGPRGLPGTPGTDGPKGAAGPDGPPGAQGPPGLQGMPGERGAAGIAGPKGDRGDVGEKGPEGAPGKDGGRGLTGPIGPPGPAGANGEKGEVGPPGPSGSTGARGAPGERGETGPPGPAGFAGPPGADGQPGAKGDQGEAGQKGDAGAPGPQGPSGAPGPQGPTGVTGPKGARGAQGPPGATGFPGAAGRVGPPGANGNPGPAGPPGPAGKDGPKGVRGDSGPPGRAGDPGLQGPAGAPGEKGEPGDDGPSGLDGPPGPQGLAGQRGIVGLPGQRGERGFPGLPGPSGEPGKQGAPGASGDRGPPGPVGPPGLTGPAGEPGREGSPGADGPPGRDGAAGVKGDRGETGALGAPGAPGPPGSPGPAGPTGKQGDRGEAGAQGPMGPSGPAGARGIAGPQGPRGDKGESGEQGERGLKGHRGFTGLQGLPGPPGPSGDQGASGPAGPSGPRGPPGPVGPSGKDGSNGIPGPIGPPGPRGRSGETGPVGPPGSPGPPGPPGPPGPGIDMSAFAGLGQREKGPDPMQYMRADEADSTLRQHDVEVDATLKSLNNQIESIRSPDGSRKNPARTCQDLKLCHPEWKSGDYWIDPNQGCTLDAMKVFCNMETGETCVYPNPATVPRKNWWSSKSKEKKHIWFGETMNGGFHFSYGDGNLAPNTANVQMTFLRLLSTEGSQNITYHCKNSIAYLDEAAGNLKKALLIQGSNDVEMRAEGNSRFTYTALKDGCTKHTGKWGKTVIEYRSQKTSRLPIIDIAPMDIGGAEQEFGVDIGPVCFL.

Positions 1 to 25 (MIRLGAPQSLVLLTLLIAAVLRCQG) are cleaved as a signal peptide. The propeptide at 26–181 (QDAQEAGSCL…PGLSAGNFAA (156 aa)) is N-terminal propeptide. The VWFC domain maps to 32-89 (GSCLQNGQRYKDKDVWKPSSCRICVCDTGNVLCDDIICEDPDCLNPEIPFGECCPICP). The segment at 96 to 179 (SGKLGPKGQK…GPPGLSAGNF (84 aa)) is disordered. 2 stretches are compositionally biased toward basic and acidic residues: residues 104–115 (QKGEPGDIRDII) and 132–153 (PRGDRGDKGEKGAPGPRGRDGE). Positions 157 to 172 (PGNPGPAGPPGPPGPP) are enriched in pro residues. Position 190 is a 5-hydroxylysine (Lys-190). An O-linked (Gal...) hydroxylysine glycan is attached at Lys-190. The segment at 191-1237 (AGGAQMGVMQ…QREKGPDPMQ (1047 aa)) is disordered. Residues 192 to 203 (GGAQMGVMQGPM) are compositionally biased toward low complexity. A triple-helical region region spans residues 201–1214 (GPMGPMGPRG…PGPPGPPGPP (1014 aa)). The span at 208-217 (PRGPPGPAGA) shows a compositional bias: pro residues. A compositionally biased stretch (low complexity) spans 218-239 (PGPQGFQGNPGEPGEPGVSGPM). A compositionally biased stretch (basic and acidic residues) spans 251–265 (PGDDGEAGKPGKSGE). 3 positions are modified to 5-hydroxylysine: Lys-287, Lys-299, and Lys-308. Lys-287, Lys-299, and Lys-308 each carry an O-linked (Gal...) hydroxylysine glycan. Composition is skewed to low complexity over residues 310–320 (ESGSPGENGSP) and 335–350 (TGPAGAAGARGNDGQP). The span at 360-369 (GPAGGPGFPG) shows a compositional bias: gly residues. Low complexity-rich tracts occupy residues 370–382 (APGAKGEAGPTGA) and 403–431 (PAGASGNPGTDGIPGAKGSAGAPGIAGAP). The residue at position 374 (Lys-374) is a 5-hydroxylysine. Lys-374 carries an O-linked (Gal...) hydroxylysine glycan. Residues 433–442 (FPGPRGPPGP) show a composition bias toward pro residues. The span at 472–485 (ETGPAGPQGAPGPA) shows a compositional bias: low complexity. Lys-608 and Lys-620 each carry 5-hydroxylysine. 2 O-linked (Gal...) hydroxylysine glycosylation sites follow: Lys-608 and Lys-620. Over residues 622–631 (LAGAPGLRGL) the composition is skewed to low complexity. Residues Pro-659 and Pro-668 each carry the 4-hydroxyproline modification. Pro-670 is subject to 3-hydroxyproline. 2 positions are modified to 4-hydroxyproline: Pro-671 and Pro-674. A compositionally biased stretch (low complexity) spans 706–736 (ERGSPGAQGLQGPRGLPGTPGTDGPKGAAGP). Over residues 764-775 (KGDRGDVGEKGP) the composition is skewed to basic and acidic residues. Composition is skewed to low complexity over residues 833-848 (AGFAGPPGADGQPGAK) and 877-914 (PTGVTGPKGARGAQGPPGATGFPGAAGRVGPPGANGNP). A 3-hydroxyproline modification is found at Pro-907. 4-hydroxyproline is present on residues Pro-908, Pro-914, and Pro-920. A compositionally biased stretch (low complexity) spans 962-980 (DGPSGLDGPPGPQGLAGQR). Pro residues predominate over residues 1069–1079 (APGPPGSPGPA). The span at 1115–1129 (RGDKGESGEQGERGL) shows a compositional bias: basic and acidic residues. Pro-1144 is subject to 3-hydroxyproline. Composition is skewed to low complexity over residues 1148–1157 (SGDQGASGPA) and 1171–1181 (PSGKDGSNGIP). Pro-1181 is subject to 4-hydroxyproline. Pro-1186 is subject to 3-hydroxyproline. Pro-1187 bears the 4-hydroxyproline mark. Residues 1199 to 1216 (VGPPGSPGPPGPPGPPGP) are compositionally biased toward pro residues. 3-hydroxyproline is present on Pro-1201. 4-hydroxyproline is present on residues Pro-1202 and Pro-1205. Pro-1207 bears the 3-hydroxyproline mark. Residues Pro-1208 and Pro-1211 each carry the 4-hydroxyproline modification. Residue Pro-1213 is modified to 3-hydroxyproline. Pro-1214 is subject to 4-hydroxyproline. The segment at 1215-1241 (GPGIDMSAFAGLGQREKGPDPMQYMRA) is nonhelical region (C-terminal). A Fibrillar collagen NC1 domain is found at 1253 to 1487 (VEVDATLKSL…GVDIGPVCFL (235 aa)). Cystine bridges form between Cys-1283-Cys-1315, Cys-1323-Cys-1485, and Cys-1393-Cys-1438. 5 residues coordinate Ca(2+): Asp-1301, Asn-1303, Gln-1304, Cys-1306, and Asp-1309.

Belongs to the fibrillar collagen family. As to quaternary structure, homotrimers of alpha 1(II) chains. Contains mostly 4-hydroxyproline. Prolines at the third position of the tripeptide repeating unit (G-X-P) are 4-hydroxylated in some or all of the chains. Post-translationally, contains 3-hydroxyproline at a few sites. This modification occurs on the first proline residue in the sequence motif Gly-Pro-Hyp, where Hyp is 4-hydroxyproline. In terms of processing, lysine residues at the third position of the tripeptide repeating unit (G-X-Y) are 5-hydroxylated in some or all of the chains. O-glycosylated on hydroxylated lysine residues. The O-linked glycan consists of a Glc-Gal disaccharide.

The protein localises to the secreted. It is found in the extracellular space. Its subcellular location is the extracellular matrix. Type II collagen is specific for cartilaginous tissues. It is essential for the normal embryonic development of the skeleton, for linear growth and for the ability of cartilage to resist compressive forces. The chain is Collagen alpha-1(II) chain from Mus musculus (Mouse).